Consider the following 450-residue polypeptide: Methylenetetrahydrofolate--tRNA-(uracil-5-)-methyltransferase TrmFO (450 aa).

9 to 14 (GGGMAG) provides a ligand contact to FAD.

The protein belongs to the MnmG family. TrmFO subfamily. FAD is required as a cofactor.

The protein localises to the cytoplasm. It carries out the reaction uridine(54) in tRNA + (6R)-5,10-methylene-5,6,7,8-tetrahydrofolate + NADH + H(+) = 5-methyluridine(54) in tRNA + (6S)-5,6,7,8-tetrahydrofolate + NAD(+). The enzyme catalyses uridine(54) in tRNA + (6R)-5,10-methylene-5,6,7,8-tetrahydrofolate + NADPH + H(+) = 5-methyluridine(54) in tRNA + (6S)-5,6,7,8-tetrahydrofolate + NADP(+). Its function is as follows. Catalyzes the folate-dependent formation of 5-methyl-uridine at position 54 (M-5-U54) in all tRNAs. This is Methylenetetrahydrofolate--tRNA-(uracil-5-)-methyltransferase TrmFO from Roseobacter denitrificans (strain ATCC 33942 / OCh 114) (Erythrobacter sp. (strain OCh 114)).